The sequence spans 209 residues: Dual specificity protein phosphatase 22 (209 aa).

The region spanning 4 to 144 (GMNKILPSLF…LEDFGKHDVY (141 aa)) is the Tyrosine-protein phosphatase domain. C88 acts as the Phosphocysteine intermediate in catalysis. The disordered stretch occupies residues 170–193 (DKHKQQEAAESQSATSSGRQWSSH). Residues 177 to 193 (AAESQSATSSGRQWSSH) are compositionally biased toward low complexity.

Belongs to the protein-tyrosine phosphatase family. Non-receptor class dual specificity subfamily.

It is found in the cytoplasm. Its subcellular location is the nucleus. The enzyme catalyses O-phospho-L-tyrosyl-[protein] + H2O = L-tyrosyl-[protein] + phosphate. The catalysed reaction is O-phospho-L-seryl-[protein] + H2O = L-seryl-[protein] + phosphate. It carries out the reaction O-phospho-L-threonyl-[protein] + H2O = L-threonyl-[protein] + phosphate. In terms of biological role, activates the Jnk signaling pathway. Dephosphorylates and deactivates p38 and stress-activated protein kinase/c-Jun N-terminal kinase (SAPK/JNK). This Xenopus tropicalis (Western clawed frog) protein is Dual specificity protein phosphatase 22 (dusp22).